The primary structure comprises 600 residues: Sulfite reductase [NADPH] flavoprotein alpha-component (600 aa).

Residues 63–201 (ITLISASQTG…AAQAWRQRVV (139 aa)) form the Flavodoxin-like domain. Residues 69–74 (SQTGNA), 116–119 (STQG), and 152–161 (LGDTSYEHFC) contribute to the FMN site. Residues 235–449 (ESPLTATLSV…IEHNDNFRLP (215 aa)) enclose the FAD-binding FR-type domain. FAD is bound by residues Thr-323, Ala-357, 387 to 390 (RLYS), 405 to 407 (TVG), and 420 to 423 (GGAS). NADP(+) contacts are provided by residues 520–521 (SR), 526–530 (KIYVQ), and Asp-562. Residue Tyr-600 coordinates FAD.

Belongs to the NADPH-dependent sulphite reductase flavoprotein subunit CysJ family. It in the N-terminal section; belongs to the flavodoxin family. The protein in the C-terminal section; belongs to the flavoprotein pyridine nucleotide cytochrome reductase family. Alpha(8)-beta(8). The alpha component is a flavoprotein, the beta component is a hemoprotein. The cofactor is FAD. Requires FMN as cofactor.

The catalysed reaction is hydrogen sulfide + 3 NADP(+) + 3 H2O = sulfite + 3 NADPH + 4 H(+). Its pathway is sulfur metabolism; hydrogen sulfide biosynthesis; hydrogen sulfide from sulfite (NADPH route): step 1/1. Component of the sulfite reductase complex that catalyzes the 6-electron reduction of sulfite to sulfide. This is one of several activities required for the biosynthesis of L-cysteine from sulfate. The flavoprotein component catalyzes the electron flow from NADPH -&gt; FAD -&gt; FMN to the hemoprotein component. This chain is Sulfite reductase [NADPH] flavoprotein alpha-component, found in Cronobacter sakazakii (strain ATCC BAA-894) (Enterobacter sakazakii).